Here is a 702-residue protein sequence, read N- to C-terminus: Choline transporter-like protein 5-A (702 aa).

Residues 21–41 (VLCCVLFVIVILGYIALGTVA) form a helical membrane-spanning segment. At 42-225 (WIHGDPRKVI…KIVEDYASCW (184 aa)) the chain is on the extracellular side. N-linked (GlcNAc...) asparagine glycans are attached at residues Asn-120, Asn-173, and Asn-180. A helical transmembrane segment spans residues 226-246 (YWIVIGLFIALVISLIFILLL). Topologically, residues 247 to 249 (RFT) are cytoplasmic. A helical membrane pass occupies residues 250–270 (AGFLLWFIIFAVILLVAYGIW). Over 271-308 (HCYWEFAVLRETPGADVTISDIGFQTDLHVYLQLSQTW) the chain is Extracellular. The helical transmembrane segment at 309–329 (LVFMVTLGLTEASIVLMLIFL) threads the bilayer. Residues 330–334 (RKRVR) lie on the Cytoplasmic side of the membrane. Residues 335–355 (IAIALLREGSRAISYIMSALF) traverse the membrane as a helical segment. Residues 356 to 357 (YP) are Extracellular-facing. A helical membrane pass occupies residues 358 to 378 (IITFVLLAICISYWAMTALFL). Over 379 to 443 (ASSGDAVYKV…RYIFILQLCN (65 aa)) the chain is Cytoplasmic. A helical transmembrane segment spans residues 444 to 464 (LLVFLWLVNFTIALGQCTVAG). Residues 465-498 (AFASYYWARRKPADIPPCPVFSSFSRALRYHTGS) lie on the Extracellular side of the membrane. A helical transmembrane segment spans residues 499–519 (LAFGSLILAVVQLIRVILEYL). Over 520–593 (DHKLKGAHNA…RVAVLDKVTD (74 aa)) the chain is Cytoplasmic. A helical transmembrane segment spans residues 594-614 (FLLFLGKLLIAGSVGVIAFFL). The Extracellular segment spans residues 615 to 632 (FTRKIPIIQEEVPVLNYY). Residues 633-653 (CVPLLTVILGSYLIAHSFFSV) form a helical membrane-spanning segment. Topologically, residues 654–699 (YAMCVDTLFLCFCEDLERNDGTTAKPFFMSPGLKRILGKAEQSPKK) are cytoplasmic.

It belongs to the CTL (choline transporter-like) family.

Its subcellular location is the cell membrane. The enzyme catalyses choline(out) + n H(+)(in) = choline(in) + n H(+)(out). In terms of biological role, choline/H+ antiporter. The polypeptide is Choline transporter-like protein 5-A (slc44a5a) (Danio rerio (Zebrafish)).